A 104-amino-acid polypeptide reads, in one-letter code: UPF0145 protein cbdbA1711 (104 aa).

This sequence belongs to the UPF0145 family.

The polypeptide is UPF0145 protein cbdbA1711 (Dehalococcoides mccartyi (strain CBDB1)).